Here is a 442-residue protein sequence, read N- to C-terminus: Probable carboxypeptidase PADG_04062 (442 aa).

Residues 1-20 (MKLQYLVALLSVQAVPPVTA) form the signal peptide. Residue Asn-102 is glycosylated (N-linked (GlcNAc...) asparagine). Asp-160 is a binding site for Zn(2+). The active-site Proton acceptor is the Glu-192. Glu-193 is a Zn(2+) binding site. N-linked (GlcNAc...) asparagine glycosylation is present at Asn-343.

The protein belongs to the peptidase M20A family. Zn(2+) serves as cofactor.

The protein resides in the secreted. This is Probable carboxypeptidase PADG_04062 from Paracoccidioides brasiliensis (strain Pb18).